The primary structure comprises 397 residues: Serpin B10 (397 aa).

The Nuclear localization signal motif lies at 74 to 77 (KKRK).

This sequence belongs to the serpin family. Ov-serpin subfamily.

It is found in the nucleus. The protein localises to the cytoplasm. Functionally, protease inhibitor that may play a role in the regulation of protease activities during hematopoiesis and apoptosis induced by TNF. May regulate protease activities in the cytoplasm and in the nucleus. This Bos taurus (Bovine) protein is Serpin B10 (SERPINB10).